A 243-amino-acid polypeptide reads, in one-letter code: Homeobox protein nob-1 (243 aa).

Over residues 1–12 the composition is skewed to polar residues; sequence MISVMQQMINND. Disordered regions lie at residues 1–23 and 40–67; these read MISVMQQMINNDSPEDSKESITS and SIQGESRSERESETGSSPQLAPSSTGMV. A DNA-binding region (homeobox) is located at residues 162–221; the sequence is GKKKRQPYKKDQISRLEYEYSVNQYLTNKRRSELSAQLMLDEKQVKVWFQNRRMKDKKLR.

The protein belongs to the abd-b homeobox family. Interacts with nuclear receptor nhr-25. Interacts with geminin homolog gmn-1. Interacts with homeodomain protein ceh-20.

It is found in the nucleus. Transcription factor, involved in posterior embryonic patterning, morphogenetic movements of the posterior hypodermis, and cell fate specification. Binds to the 5'-TAGT-3' motif in regulatory elements of genes, including Meis protein psa-3 and microRNA mir-57. Involved in a negative regulatory loop with mir-57 to specify posterior cell identities. Required for asymmetric division of the T hypodermal cell, acting via the regulation of asymmetric expression of psa-3 in cooperation with ceh-20 and the Wnt-MAPK pathway. Involved in the regulation of the onset of non-apoptotic cell death in the linker cell, acting together with the Wnt signaling pathway. Involved in promoting embryogenesis, in concert with orphan nuclear receptor nhr-25. May regulate expression of transcription factor dmd-3. The sequence is that of Homeobox protein nob-1 from Caenorhabditis elegans.